A 425-amino-acid chain; its full sequence is G protein-activated inward rectifier potassium channel 2 (425 aa).

The Cytoplasmic portion of the chain corresponds to 1-91 (MTMAKLTESM…IFTTLVDLKW (91 aa)). Residues Ser18 and Ser25 each carry the phosphoserine modification. Residues 92–116 (RFNLLIFVMVYTVTWLFFGMIWWLI) traverse the membrane as a helical segment. Topologically, residues 117–140 (AYIRGDMDHIEDPSWTPCVTNLNG) are extracellular. Residues 141–152 (FVSAFLFSIETE) constitute an intramembrane region (helical; Pore-forming). Residues 153 to 159 (TTIGYGY) constitute an intramembrane region (pore-forming). The short motif at 154-159 (TIGYGY) is the Selectivity filter element. Residues 160–168 (RVITDKCPE) lie on the Extracellular side of the membrane. The helical transmembrane segment at 169–190 (GIILLLIQSVLGSIVNAFMVGC) threads the bilayer. At 191–425 (MFVKISQPKK…VANLENESKV (235 aa)) the chain is on the cytoplasmic side. The segment at 392-425 (NQHAELETEEEEKNPEELTERNGDVANLENESKV) is disordered. The PDZ-binding signature appears at 422-425 (ESKV).

The protein belongs to the inward rectifier-type potassium channel (TC 1.A.2.1) family. KCNJ6 subfamily. Associates with KCNJ3/GIRK1 or KCNJ5/GRIK4 to form a G-protein-activated heteromultimer pore-forming unit. The resulting inward current is much larger. Interacts (via PDZ-binding motif) with SNX27 (via PDZ domain); the interaction is required for recycling to the plasma membrane when endocytosed and prevent degradation in lysosomes. In terms of tissue distribution, pancreatic beta cells and brain.

The protein resides in the membrane. The enzyme catalyses K(+)(in) = K(+)(out). With respect to regulation, activated by phosphatidylinositol 4,5 biphosphate (PtdIns(4,5)P2). Its function is as follows. Inward rectifier potassium channels are characterized by a greater tendency to allow potassium to flow into the cell rather than out of it. Their voltage dependence is regulated by the concentration of extracellular potassium; as external potassium is raised, the voltage range of the channel opening shifts to more positive voltages. The inward rectification is mainly due to the blockage of outward current by internal magnesium. This potassium channel may be involved in the regulation of insulin secretion by glucose and/or neurotransmitters acting through G-protein-coupled receptors. The sequence is that of G protein-activated inward rectifier potassium channel 2 (Kcnj6) from Rattus norvegicus (Rat).